Reading from the N-terminus, the 231-residue chain is Ribosyldihydronicotinamide dehydrogenase [quinone] (231 aa).

FAD contacts are provided by residues His-12 and 18–21; that span reads FNGS. Ser-80 is modified (phosphoserine). Residue 104–107 participates in FAD binding; it reads LYWF. 127–129 is a binding site for substrate; that stretch reads FDI. FAD is bound by residues 148 to 151 and Tyr-156; that span reads TTGG. Zn(2+) is bound by residues His-174 and His-178. Glu-194 contributes to the FAD binding site. Residue Ser-197 is modified to Phosphoserine. Arg-201 contributes to the FAD binding site. A Zn(2+)-binding site is contributed by Cys-223.

Belongs to the NAD(P)H dehydrogenase (quinone) family. In terms of assembly, homodimer. It depends on Zn(2+) as a cofactor. FAD serves as cofactor.

The protein localises to the cytoplasm. It carries out the reaction 1-(beta-D-ribofuranosyl)-1,4-dihydronicotinamide + a quinone + H(+) = beta-nicotinamide D-riboside + a quinol. Its activity is regulated as follows. Inhibited by melatonin, resveratrol and 5-hydroxytryptamine. The enzyme apparently serves as a quinone reductase in connection with conjugation reactions of hydroquinones involved in detoxification pathways as well as in biosynthetic processes such as the vitamin K-dependent gamma-carboxylation of glutamate residues in prothrombin synthesis. The polypeptide is Ribosyldihydronicotinamide dehydrogenase [quinone] (NQO2) (Homo sapiens (Human)).